Here is a 159-residue protein sequence, read N- to C-terminus: Large ribosomal subunit protein uL15 (159 aa).

A disordered region spans residues 1 to 46 (MKLNELSPSVPKKNRKRIGRGNSSGWGKTAGKGSNGQNSRAGGGVK). The segment covering 22–34 (NSSGWGKTAGKGS) has biased composition (gly residues).

Belongs to the universal ribosomal protein uL15 family. In terms of assembly, part of the 50S ribosomal subunit.

Its function is as follows. Binds to the 23S rRNA. This is Large ribosomal subunit protein uL15 from Fusobacterium nucleatum subsp. nucleatum (strain ATCC 25586 / DSM 15643 / BCRC 10681 / CIP 101130 / JCM 8532 / KCTC 2640 / LMG 13131 / VPI 4355).